The chain runs to 283 residues: Pantothenate synthetase (283 aa).

34 to 41 (MGALHDGH) contacts ATP. H41 (proton donor) is an active-site residue. Q65 provides a ligand contact to (R)-pantoate. Q65 contributes to the beta-alanine binding site. 152-155 (GEKD) serves as a coordination point for ATP. Position 158 (Q158) interacts with (R)-pantoate. ATP is bound by residues V181 and 189–192 (MSSR).

This sequence belongs to the pantothenate synthetase family. In terms of assembly, homodimer.

It is found in the cytoplasm. The enzyme catalyses (R)-pantoate + beta-alanine + ATP = (R)-pantothenate + AMP + diphosphate + H(+). It participates in cofactor biosynthesis; (R)-pantothenate biosynthesis; (R)-pantothenate from (R)-pantoate and beta-alanine: step 1/1. In terms of biological role, catalyzes the condensation of pantoate with beta-alanine in an ATP-dependent reaction via a pantoyl-adenylate intermediate. The polypeptide is Pantothenate synthetase (Bradyrhizobium sp. (strain BTAi1 / ATCC BAA-1182)).